The following is a 246-amino-acid chain: Uridylate kinase (246 aa).

10-13 (KLSG) contacts ATP. Residue Gly52 participates in UMP binding. ATP contacts are provided by Gly53 and Arg57. UMP contacts are provided by residues Asp72 and 133–140 (TGNPFFTT). 3 residues coordinate ATP: Thr160, Tyr166, and Asp169.

Belongs to the UMP kinase family. Homohexamer.

The protein resides in the cytoplasm. The catalysed reaction is UMP + ATP = UDP + ADP. Its pathway is pyrimidine metabolism; CTP biosynthesis via de novo pathway; UDP from UMP (UMPK route): step 1/1. Inhibited by UTP. Functionally, catalyzes the reversible phosphorylation of UMP to UDP. This is Uridylate kinase from Halorhodospira halophila (strain DSM 244 / SL1) (Ectothiorhodospira halophila (strain DSM 244 / SL1)).